The primary structure comprises 188 residues: Elongation factor P (188 aa).

The protein belongs to the elongation factor P family.

Its subcellular location is the cytoplasm. It functions in the pathway protein biosynthesis; polypeptide chain elongation. Involved in peptide bond synthesis. Stimulates efficient translation and peptide-bond synthesis on native or reconstituted 70S ribosomes in vitro. Probably functions indirectly by altering the affinity of the ribosome for aminoacyl-tRNA, thus increasing their reactivity as acceptors for peptidyl transferase. The protein is Elongation factor P of Methylorubrum extorquens (strain CM4 / NCIMB 13688) (Methylobacterium extorquens).